The sequence spans 332 residues: Lipoyl synthase (332 aa).

7 residues coordinate [4Fe-4S] cluster: cysteine 74, cysteine 79, cysteine 85, cysteine 100, cysteine 104, cysteine 107, and serine 314. Residues 85 to 303 form the Radical SAM core domain; that stretch reads CFGKGTATFM…EQEAYRMGFS (219 aa).

It belongs to the radical SAM superfamily. Lipoyl synthase family. [4Fe-4S] cluster is required as a cofactor.

Its subcellular location is the cytoplasm. The enzyme catalyses [[Fe-S] cluster scaffold protein carrying a second [4Fe-4S](2+) cluster] + N(6)-octanoyl-L-lysyl-[protein] + 2 oxidized [2Fe-2S]-[ferredoxin] + 2 S-adenosyl-L-methionine + 4 H(+) = [[Fe-S] cluster scaffold protein] + N(6)-[(R)-dihydrolipoyl]-L-lysyl-[protein] + 4 Fe(3+) + 2 hydrogen sulfide + 2 5'-deoxyadenosine + 2 L-methionine + 2 reduced [2Fe-2S]-[ferredoxin]. Its pathway is protein modification; protein lipoylation via endogenous pathway; protein N(6)-(lipoyl)lysine from octanoyl-[acyl-carrier-protein]: step 2/2. Functionally, catalyzes the radical-mediated insertion of two sulfur atoms into the C-6 and C-8 positions of the octanoyl moiety bound to the lipoyl domains of lipoate-dependent enzymes, thereby converting the octanoylated domains into lipoylated derivatives. This Verminephrobacter eiseniae (strain EF01-2) protein is Lipoyl synthase.